A 1327-amino-acid polypeptide reads, in one-letter code: uncharacterized protein (1327 aa).

Substrate is bound at residue 884–885 (WD). The active-site Proton donor is the Glu-1023. 1143–1144 (KQ) is a substrate binding site.

In the N-terminal section; belongs to the trehalose phosphatase family. It in the C-terminal section; belongs to the glycosyl hydrolase 65 family.

This is an uncharacterized protein from Mycobacterium tuberculosis (strain CDC 1551 / Oshkosh).